A 96-amino-acid chain; its full sequence is Large ribosomal subunit protein uL23 (96 aa).

It belongs to the universal ribosomal protein uL23 family. In terms of assembly, part of the 50S ribosomal subunit. Contacts protein L29, and trigger factor when it is bound to the ribosome.

Its function is as follows. One of the early assembly proteins it binds 23S rRNA. One of the proteins that surrounds the polypeptide exit tunnel on the outside of the ribosome. Forms the main docking site for trigger factor binding to the ribosome. The sequence is that of Large ribosomal subunit protein uL23 from Ruthia magnifica subsp. Calyptogena magnifica.